The primary structure comprises 1273 residues: DNA polymerase 037L (1273 aa).

Residues 679–837 (IRKNAITEEL…ENKSKEDIDE (159 aa)) adopt a coiled-coil conformation.

It belongs to the DNA polymerase type-B family.

The catalysed reaction is DNA(n) + a 2'-deoxyribonucleoside 5'-triphosphate = DNA(n+1) + diphosphate. In terms of biological role, DNA-directed DNA polymerase involved in viral DNA replication. The chain is DNA polymerase 037L (DPOL) from Invertebrate iridescent virus 6 (IIV-6).